The chain runs to 365 residues: Gene 1 protein (365 aa).

8–15 (GKLGAGKT) is a binding site for ATP. The chain crosses the membrane as a helical span at residues 255–272 (VFLMASFLALGAACGIFY).

It belongs to the inovirus G1P protein family. In terms of assembly, interacts with G4P; this interaction results in a complex that spans the inner an outer host membranes.

It localises to the host membrane. In terms of biological role, isoform G1P plays an essential role in phage assembly. It is required to increase the number of adhesion zones between the inner and outer membranes of the host cell. The extrusion of neo-synthesized phages occurs at these adhesion sites. May be involved with G4P in creating zone through which the phage assembled and extruded. Isoform G11P is also involved in phage assembly, probably playing a structural role in the formation of the phage assembly site. This Salmonella phage IKe (Bacteriophage IKe) protein is Gene 1 protein (I).